The sequence spans 393 residues: Formate-dependent phosphoribosylglycinamide formyltransferase (393 aa).

N(1)-(5-phospho-beta-D-ribosyl)glycinamide is bound by residues 22 to 23 and glutamate 82; that span reads EL. Residues arginine 114, lysine 155, 160-165, 195-198, and glutamate 203 contribute to the ATP site; these read SSGKGQ and EGLV. The region spanning 119–308 is the ATP-grasp domain; the sequence is RLAAETLQLP…EFALHVRAFL (190 aa). Positions 267 and 279 each coordinate Mg(2+). N(1)-(5-phospho-beta-D-ribosyl)glycinamide is bound by residues aspartate 286, lysine 355, and 362 to 363; that span reads RR.

The protein belongs to the PurK/PurT family. As to quaternary structure, homodimer.

It catalyses the reaction N(1)-(5-phospho-beta-D-ribosyl)glycinamide + formate + ATP = N(2)-formyl-N(1)-(5-phospho-beta-D-ribosyl)glycinamide + ADP + phosphate + H(+). It functions in the pathway purine metabolism; IMP biosynthesis via de novo pathway; N(2)-formyl-N(1)-(5-phospho-D-ribosyl)glycinamide from N(1)-(5-phospho-D-ribosyl)glycinamide (formate route): step 1/1. Its function is as follows. Involved in the de novo purine biosynthesis. Catalyzes the transfer of formate to 5-phospho-ribosyl-glycinamide (GAR), producing 5-phospho-ribosyl-N-formylglycinamide (FGAR). Formate is provided by PurU via hydrolysis of 10-formyl-tetrahydrofolate. The sequence is that of Formate-dependent phosphoribosylglycinamide formyltransferase from Yersinia pseudotuberculosis serotype IB (strain PB1/+).